Consider the following 281-residue polypeptide: ATP phosphoribosyltransferase (281 aa).

This sequence belongs to the ATP phosphoribosyltransferase family. Long subfamily. Mg(2+) serves as cofactor.

The protein localises to the cytoplasm. It carries out the reaction 1-(5-phospho-beta-D-ribosyl)-ATP + diphosphate = 5-phospho-alpha-D-ribose 1-diphosphate + ATP. Its pathway is amino-acid biosynthesis; L-histidine biosynthesis; L-histidine from 5-phospho-alpha-D-ribose 1-diphosphate: step 1/9. Feedback inhibited by histidine. Functionally, catalyzes the condensation of ATP and 5-phosphoribose 1-diphosphate to form N'-(5'-phosphoribosyl)-ATP (PR-ATP). Has a crucial role in the pathway because the rate of histidine biosynthesis seems to be controlled primarily by regulation of HisG enzymatic activity. The sequence is that of ATP phosphoribosyltransferase from Corynebacterium glutamicum (strain R).